Consider the following 394-residue polypeptide: Stabilizer of axonemal microtubules 2 (394 aa).

Mn regions lie at residues 110–122 (STTF…PQEI), 144–158 (DTSH…QLEV), 244–256 (NSTS…PYQA), 278–292 (KSTT…EICR), 312–324 (LSTF…PHEL), and 346–360 (VTMY…KQEI).

Belongs to the FAM154 family.

This chain is Stabilizer of axonemal microtubules 2 (Saxo2), found in Mus musculus (Mouse).